We begin with the raw amino-acid sequence, 67 residues long: Probable Sec-independent protein translocase protein TatE (67 aa).

Residues 4-21 (ISITKLLVVAALVVLLFG) traverse the membrane as a helical segment.

This sequence belongs to the TatA/E family. TatE subfamily.

Its subcellular location is the cell inner membrane. In terms of biological role, part of the twin-arginine translocation (Tat) system that transports large folded proteins containing a characteristic twin-arginine motif in their signal peptide across membranes. TatE shares overlapping functions with TatA. This is Probable Sec-independent protein translocase protein TatE from Salmonella arizonae (strain ATCC BAA-731 / CDC346-86 / RSK2980).